Reading from the N-terminus, the 33-residue chain is Photosystem II reaction center protein Psb30 (33 aa).

Residues 5–25 (VIAQLTVLSLIVLSGPLVIIL) form a helical membrane-spanning segment.

Belongs to the Psb30/Ycf12 family. As to quaternary structure, PSII is composed of 1 copy each of membrane proteins PsbA, PsbB, PsbC, PsbD, PsbE, PsbF, PsbH, PsbI, PsbJ, PsbK, PsbL, PsbM, PsbT, PsbX, PsbY, PsbZ, Psb30/Ycf12, peripheral proteins of the oxygen-evolving complex and a large number of cofactors. It forms dimeric complexes.

The protein localises to the plastid. Its subcellular location is the chloroplast thylakoid membrane. Functionally, a core subunit of photosystem II (PSII), probably helps stabilize the reaction center. The sequence is that of Photosystem II reaction center protein Psb30 from Chlorokybus atmophyticus (Soil alga).